A 97-amino-acid chain; its full sequence is DTDSDLVLDVDGNPLEVGSEYYIGRAVGFYVVERFSSDVQIDSGLCRSDGFWRVSLDAYSPPTTTSSQQQRYLTVFRDRLSGLKLVGLTDDSDRVVL.

It belongs to the protease inhibitor I3 (leguminous Kunitz-type inhibitor) family.

Functionally, exhibits Kunitz trypsin protease inhibitor activity. The protein is Kunitz-type trypsin inhibitor 1 of Selenicereus costaricensis (Red-fleshed dragon fruit).